Here is a 98-residue protein sequence, read N- to C-terminus: Keratin-associated protein 3-3 (98 aa).

Repeat copies occupy residues 3-7, 47-51, and 89-93. The 3 X 5 AA repeats of C-C-X(3) stretch occupies residues 3-59; that stretch reads CCASRGCSVPTGPATTICSSDKSCRCGVCLPSTCPHTVWLLEPTCCDNCPPPCHIPQ.

Belongs to the KRTAP type 3 family. In terms of assembly, interacts with hair keratins. As to expression, localized to the upper cortex of the hair shaft.

In the hair cortex, hair keratin intermediate filaments are embedded in an interfilamentous matrix, consisting of hair keratin-associated proteins (KRTAP), which are essential for the formation of a rigid and resistant hair shaft through their extensive disulfide bond cross-linking with abundant cysteine residues of hair keratins. The matrix proteins include the high-sulfur and high-glycine-tyrosine keratins. In Homo sapiens (Human), this protein is Keratin-associated protein 3-3 (KRTAP3-3).